The sequence spans 189 residues: MEQIDKQKIADAVKVILEAVGENPEREGLIDTPMRVARMYEEVFAGLKKDPSVHFDTIFEEQHEELVLVKDIRFSSMCEHHLVPFFGVAHVAYLPQNGRVAGLSKLARVVDDVSRRPQLQERITTTVAEIMMDKLKPLGVMVIMEAEHMCMTIRGVNKPGTKTITSAVRGAFKNDDKLRSEVLALIKHN.

Zn(2+) contacts are provided by Cys78, His81, and Cys150.

The protein belongs to the GTP cyclohydrolase I family. In terms of assembly, toroid-shaped homodecamer, composed of two pentamers of five dimers.

The catalysed reaction is GTP + H2O = 7,8-dihydroneopterin 3'-triphosphate + formate + H(+). Its pathway is cofactor biosynthesis; 7,8-dihydroneopterin triphosphate biosynthesis; 7,8-dihydroneopterin triphosphate from GTP: step 1/1. This Listeria innocua serovar 6a (strain ATCC BAA-680 / CLIP 11262) protein is GTP cyclohydrolase 1.